Reading from the N-terminus, the 341-residue chain is Protein FAM50A (341 aa).

Disordered stretches follow at residues 1–27 and 80–147; these read MAQY…EREQ and LVKE…EIEE. A compositionally biased stretch (basic and acidic residues) spans 80 to 115; the sequence is LVKEREKQLAKKEQSKELQLKLEKQKEKKRKEEQKR. Residues 125 to 147 are compositionally biased toward acidic residues; it reads DEGEDEEEEEEEEEEEEEDEIEE.

The protein belongs to the FAM50 family.

The protein resides in the nucleus. Functionally, probably involved in the regulation of pre-mRNA splicing. The chain is Protein FAM50A (fam50a) from Danio rerio (Zebrafish).